The sequence spans 248 residues: Ribonuclease 3 (248 aa).

In terms of domain architecture, RNase III spans 16–145; sequence TEGLETSIGY…LLAAMYLDGG (130 aa). E58 serves as a coordination point for Mg(2+). D62 is an active-site residue. 2 residues coordinate Mg(2+): N131 and E134. E134 is a catalytic residue. Residues 172–241 form the DRBM domain; it reads DFKTDFQELA…ARQCLERLET (70 aa).

It belongs to the ribonuclease III family. Homodimer. The cofactor is Mg(2+).

Its subcellular location is the cytoplasm. It carries out the reaction Endonucleolytic cleavage to 5'-phosphomonoester.. Its function is as follows. Digests double-stranded RNA. Involved in the processing of primary rRNA transcript to yield the immediate precursors to the large and small rRNAs (23S and 16S). Processes some mRNAs, and tRNAs when they are encoded in the rRNA operon. Processes pre-crRNA and tracrRNA of type II CRISPR loci if present in the organism. In Geobacter sulfurreducens (strain ATCC 51573 / DSM 12127 / PCA), this protein is Ribonuclease 3.